Here is a 413-residue protein sequence, read N- to C-terminus: Multifunctional CCA protein (413 aa).

Glycine 8 and arginine 11 together coordinate ATP. Glycine 8 and arginine 11 together coordinate CTP. 2 residues coordinate Mg(2+): aspartate 21 and aspartate 23. Residues arginine 91, arginine 137, and arginine 140 each coordinate ATP. CTP-binding residues include arginine 91, arginine 137, and arginine 140. The HD domain occupies 228-329 (TGVHTLMTLS…VKLFDAIDAW (102 aa)).

This sequence belongs to the tRNA nucleotidyltransferase/poly(A) polymerase family. Bacterial CCA-adding enzyme type 1 subfamily. As to quaternary structure, monomer. Can also form homodimers and oligomers. The cofactor is Mg(2+). Ni(2+) is required as a cofactor.

It catalyses the reaction a tRNA precursor + 2 CTP + ATP = a tRNA with a 3' CCA end + 3 diphosphate. The enzyme catalyses a tRNA with a 3' CCA end + 2 CTP + ATP = a tRNA with a 3' CCACCA end + 3 diphosphate. Its function is as follows. Catalyzes the addition and repair of the essential 3'-terminal CCA sequence in tRNAs without using a nucleic acid template. Adds these three nucleotides in the order of C, C, and A to the tRNA nucleotide-73, using CTP and ATP as substrates and producing inorganic pyrophosphate. tRNA 3'-terminal CCA addition is required both for tRNA processing and repair. Also involved in tRNA surveillance by mediating tandem CCA addition to generate a CCACCA at the 3' terminus of unstable tRNAs. While stable tRNAs receive only 3'-terminal CCA, unstable tRNAs are marked with CCACCA and rapidly degraded. This is Multifunctional CCA protein from Salmonella agona (strain SL483).